The following is a 772-amino-acid chain: uncharacterized protein (772 aa).

A run of 2 helical transmembrane segments spans residues 16-36 and 301-321; these read LITFFCLLSTIPVILVGLFSY and IGWITFAVCLILLTLSLLFSW. One can recognise an HTH araC/xylS-type domain in the interval 670–768; sequence DNIIHIIHHE…GITPGNYRQQ (99 aa). 2 consecutive DNA-binding regions (H-T-H motif) follow at residues 687-708 and 735-758; these read DEIARRLHYNPNYLSSIFKKEM and VKDIAEKLKYKNSQNFIRSFKKLE.

The protein localises to the cell membrane. This is an uncharacterized protein from Bacillus subtilis (strain 168).